Here is a 1982-residue protein sequence, read N- to C-terminus: Ras guanine nucleotide exchange factor V (1982 aa).

LRR repeat units lie at residues 1-26, 47-68, 69-94, 105-128, 130-151, 164-187, 188-210, 212-234, 236-257, 261-284, 286-307, 308-330, 331-352, 354-376, and 378-399; these read MGNI…SLEG, LTQL…ITNL, SNLS…PFKP, NENL…VFVL, NLKQ…LCGG, ACQL…IGDQ, LTTL…SFSN, VSLT…LCTL, KLVH…HTLG, LPSL…ILEI, SLRV…IGNL, LNLN…IGEL, INLR…EFSK, SKLN…LHSL, and QLLR…LIKS. At 1–1831 the chain is on the extracellular side; that stretch reads MGNINSICLN…IANAFYELRN (1831 aa). 3 disordered regions span residues 414–436, 457–532, and 615–654; these read YGST…STHG, NQIN…NKKQ, and NNSG…RRGS. Composition is skewed to low complexity over residues 415–436 and 457–495; these read GSTM…STHG and NQIN…TPNG. The stretch at 443–466 is one LRR 16 repeat; the sequence is DILLSSVTLNNSILNQINNNNNNN. Over residues 506-520 the composition is skewed to polar residues; it reads LTISRSLFRGNSSNL. The stretch at 515-567 forms a coiled coil; it reads GNSSNLESEKEDFINKKQQQQQQQQQQQQQQQQQQQQQQQQQQQQQQQQQQLG. An LRR 17 repeat occupies 592 to 615; sequence EDDIQKMQLGLEALSNLETSIGSN. The span at 616-642 shows a compositional bias: gly residues; that stretch reads NSGGGDSMNGSGGNINNSGGSGSGCGT. LRR repeat units follow at residues 657–684 and 773–796; these read LPPT…VMSG and HSNL…LSSS. Disordered stretches follow at residues 756–778 and 807–829; these read QSST…NLSQ and LQFQ…SNQP. The GBD/FH3 domain maps to 832–1236; the sequence is TIVPSFSKFK…QIKYSIDRYG (405 aa). 4 LRR repeats span residues 979–1003, 1075–1100, 1239–1263, and 1689–1712; these read LLGI…GYCL, SPYV…VFKI, VPAI…RWVD, and VQNM…FVDL. Residues 1595 to 1717 enclose the N-terminal Ras-GEF domain; that stretch reads KDRRVSSVTL…LFVDLSTKSY (123 aa). One can recognise a Ras-GEF domain in the interval 1747-1974; the sequence is DEIEIARQLS…YEMSLSAEPR (228 aa). The chain crosses the membrane as a helical span at residues 1832 to 1848; sequence YHLLMAIISGLNASPVL. Topologically, residues 1849–1982 are cytoplasmic; it reads RLKYTKGKLS…PRNAERYDIQ (134 aa). LRR repeat units lie at residues 1865–1888 and 1917–1941; these read LDTL…LAAA and RINF…LFPY.

The protein localises to the membrane. Its function is as follows. Promotes the exchange of Ras-bound GDP by GTP. In Dictyostelium discoideum (Social amoeba), this protein is Ras guanine nucleotide exchange factor V (gefV).